A 125-amino-acid chain; its full sequence is Small ribosomal subunit protein bS6m (125 aa).

The protein belongs to the bacterial ribosomal protein bS6 family. As to quaternary structure, component of the mitochondrial small ribosomal subunit (mt-SSU). Mature mammalian 55S mitochondrial ribosomes consist of a small (28S) and a large (39S) subunit. The 28S small subunit contains a 12S ribosomal RNA (12S mt-rRNA) and 30 different proteins. The 39S large subunit contains a 16S rRNA (16S mt-rRNA), a copy of mitochondrial valine transfer RNA (mt-tRNA(Val)), which plays an integral structural role, and 52 different proteins.

The protein localises to the mitochondrion. The protein is Small ribosomal subunit protein bS6m (MRPS6) of Homo sapiens (Human).